The following is a 278-amino-acid chain: Small ribosomal subunit protein uS3 (278 aa).

The region spanning 38 to 106 (IRKLLSKGME…QVQLNILEVK (69 aa)) is the KH type-2 domain. The segment at 213-278 (RQAQAAARAG…APAPAENQEG (66 aa)) is disordered. Positions 214-223 (QAQAAARAGV) are enriched in low complexity. Positions 232–253 (RGGERPSRGSRGDRPTRADRGG) are enriched in basic and acidic residues. Residues 259-278 (EATGAATEQAAPAPAENQEG) show a composition bias toward low complexity.

The protein belongs to the universal ribosomal protein uS3 family. Part of the 30S ribosomal subunit. Forms a tight complex with proteins S10 and S14.

Binds the lower part of the 30S subunit head. Binds mRNA in the 70S ribosome, positioning it for translation. The polypeptide is Small ribosomal subunit protein uS3 (Nocardioides sp. (strain ATCC BAA-499 / JS614)).